The chain runs to 1424 residues: MNKLVGLLVSSLFLASILIGIAPAITTTALTPPVSAGGIQAYLLTGSGAPASGLVLFVVNVSNIQVSSSNVTNVISTVVSNIQINAKTENAQTGATTGSVTVRFPTSGYNAYYDSVDKVVFVVVSFLYPYTTTSVNIPLSYLSKYLPGLLTAQPYDETGAQVTSVSSTPFGSLIDTSTGQQILGTNPVLTSYNSYTTQANTNMQEGVVSGTLTSFTLGGQSFSGSTVPVILYAPFIFSNSPYQAGLYNPMQVNGNLGSLSSEAYYHPVIWGRALINTTLIDTYASGSVPFTFQLNYSVPGPLTINMAQLAWIASINNLPTSFTYLSYKFSNGYESFLGIISNSTQLTAGALTINPSGNFTINGKKFYVYLLVVGSTNSTTPVEYVTKLVVEYPSSTNFLPQGVTVTTSSNKYTLPVYEIGGPAGTTITLTGNWYSTPYTVQITVGSTPTLTNYVSQILLKAVAYEGINVSTTQSPYYSTAILSTPPSEISITGSSTITAQGKLTATSASATVNLLTNATLTYENIPLTQYSFNGIIVTPGYAAINGTTAMAYVIGALYNKTSDYVLSFAGSQEPMQVMNNNLTEVTTLAPFGLTLLAPSVPATETGTSPLQLEFFTVPSTSYIALVDFGLWGNLTSVTVSAYDTVNNKLSVNLGYFYGIVIPPSISTAPYNYQNFICPNNYVTVTIYDPDAVLDPYPSGSFTTSSLPLKYGNMNITGAVIFPGSSVYNPSGVFGYSNFNKGAAVTTFTYTAQSGPFSPVALTGNTNYLSQYADNNPTDNYYFIQTVNGMPVLMGGLSIVASPVSASLPSSTSSPGFMYLLPSAAQVPSPLPGMATPNYNLNIYITYKIDGATVGNNMINGLYVASQNTLIYVVPNGSFVGSNIKLTYTTTDYAVLHYFYSTGQYKVFKTVSVPNVTANLYFPSSTTPLYQLSVPLYLSEPYYGSPLPTYIGLGTNGTSLWNSPNYVLFGVSAVQQYLGFIKSISVTLSNGTTVVIPLTTSNMQTLFPQLVGQELQACNGTFQFGISITGLEKLLNLNVQQLNNSILSVTYHDYVTGETLTATTKLVALSTLSLVAKGAGVVEFLLTAYPYTGNITFAPPWFIAENVVKQPFMTYSDLQFAKTNPSAILSLSTVNITVVGLGGKASVYYNSTSGQTVITNIYGQTVATLSGNVLPTLTELAAGNGTFTGSLQFTIVPNNTVVQIPSSLTKTSFAVYTNGSLAIVLNGKAYSLGPAGLFLLPFVTYTGSAIGANATAIITVSDGVGTSTTQVPITAENFTPIRLAPFQVPAQVPLPNAPKLKYEYNGSIVITPQQQVLKIYVTSILPYPQEFQIQAFVYEASQFNVHTGSPTAAPVYFSYSAVRAYPALGIGTSVPNLLVYVQLQGISNLPAGKYVIVLSAVPFAGGPVLSEYPAQLIFTNVTLTQ.

Residues 1 to 24 form the signal peptide; that stretch reads MNKLVGLLVSSLFLASILIGIAPA. Asn-60, Asn-70, Asn-276, Asn-295, Asn-342, Asn-358, Asn-377, Asn-468, Asn-517, Asn-545, Asn-559, Asn-581, Asn-633, Asn-714, Asn-875, Asn-914, Asn-955, Asn-989, Asn-1018, Asn-1042, Asn-1093, Asn-1134, Asn-1197, Asn-1217, Asn-1252, Asn-1276, Asn-1304, and Asn-1419 each carry an N-linked (GlcNAc...) asparagine glycan.

This sequence belongs to the Sulfolobales SlaA family. In terms of assembly, the mushroom-shaped unit cells of the Sulfolobales' S-layers may consist of three SlaB subunits and six SlaA subunits. Post-translationally, glycosylated. C-terminal glycosylation sites are modified with a heterogeneous family of glycans, with the largest having a composition Glc(1)Man(2)GlcNAc(2) plus 6-sulfoquinovose (QuiS).

The protein localises to the secreted. The protein resides in the cell wall. It localises to the S-layer. In terms of biological role, S-layer large protein. May form the highly ordered outer sheath. The chain is S-layer protein A from Sulfolobus acidocaldarius (strain ATCC 33909 / DSM 639 / JCM 8929 / NBRC 15157 / NCIMB 11770).